Consider the following 266-residue polypeptide: Orotidine 5'-phosphate decarboxylase (266 aa).

Substrate is bound by residues Asp37, 59 to 61 (KTH), 91 to 100 (DRKFADIGNT), Tyr217, and Arg235. Catalysis depends on Lys93, which acts as the Proton donor.

It belongs to the OMP decarboxylase family.

The catalysed reaction is orotidine 5'-phosphate + H(+) = UMP + CO2. It participates in pyrimidine metabolism; UMP biosynthesis via de novo pathway; UMP from orotate: step 2/2. In Cyberlindnera jadinii (Torula yeast), this protein is Orotidine 5'-phosphate decarboxylase (URA3).